We begin with the raw amino-acid sequence, 122 residues long: Large ribosomal subunit protein uL14 (122 aa).

Belongs to the universal ribosomal protein uL14 family. Part of the 50S ribosomal subunit. Forms a cluster with proteins L3 and L19. In the 70S ribosome, L14 and L19 interact and together make contacts with the 16S rRNA in bridges B5 and B8.

Its function is as follows. Binds to 23S rRNA. Forms part of two intersubunit bridges in the 70S ribosome. This chain is Large ribosomal subunit protein uL14, found in Treponema denticola (strain ATCC 35405 / DSM 14222 / CIP 103919 / JCM 8153 / KCTC 15104).